Reading from the N-terminus, the 162-residue chain is tRNA (cytidine(34)-2'-O)-methyltransferase (162 aa).

S-adenosyl-L-methionine-binding residues include Leu-80, Gly-102, Leu-124, and Ser-132.

Belongs to the class IV-like SAM-binding methyltransferase superfamily. RNA methyltransferase TrmH family. TrmL subfamily. Homodimer.

It localises to the cytoplasm. The enzyme catalyses cytidine(34) in tRNA + S-adenosyl-L-methionine = 2'-O-methylcytidine(34) in tRNA + S-adenosyl-L-homocysteine + H(+). It carries out the reaction 5-carboxymethylaminomethyluridine(34) in tRNA(Leu) + S-adenosyl-L-methionine = 5-carboxymethylaminomethyl-2'-O-methyluridine(34) in tRNA(Leu) + S-adenosyl-L-homocysteine + H(+). Functionally, methylates the ribose at the nucleotide 34 wobble position in the two leucyl isoacceptors tRNA(Leu)(CmAA) and tRNA(Leu)(cmnm5UmAA). Catalyzes the methyl transfer from S-adenosyl-L-methionine to the 2'-OH of the wobble nucleotide. This chain is tRNA (cytidine(34)-2'-O)-methyltransferase, found in Acidovorax sp. (strain JS42).